We begin with the raw amino-acid sequence, 182 residues long: ATP synthase subunit delta 2 (182 aa).

Belongs to the ATPase delta chain family. As to quaternary structure, F-type ATPases have 2 components, F(1) - the catalytic core - and F(0) - the membrane proton channel. F(1) has five subunits: alpha(3), beta(3), gamma(1), delta(1), epsilon(1). F(0) has three main subunits: a(1), b(2) and c(10-14). The alpha and beta chains form an alternating ring which encloses part of the gamma chain. F(1) is attached to F(0) by a central stalk formed by the gamma and epsilon chains, while a peripheral stalk is formed by the delta and b chains.

The protein resides in the cell inner membrane. In terms of biological role, f(1)F(0) ATP synthase produces ATP from ADP in the presence of a proton or sodium gradient. F-type ATPases consist of two structural domains, F(1) containing the extramembraneous catalytic core and F(0) containing the membrane proton channel, linked together by a central stalk and a peripheral stalk. During catalysis, ATP synthesis in the catalytic domain of F(1) is coupled via a rotary mechanism of the central stalk subunits to proton translocation. Its function is as follows. This protein is part of the stalk that links CF(0) to CF(1). It either transmits conformational changes from CF(0) to CF(1) or is implicated in proton conduction. In Photobacterium profundum (strain SS9), this protein is ATP synthase subunit delta 2.